Reading from the N-terminus, the 126-residue chain is Probable S-adenosyl-L-methionine-binding protein MJ1583 (126 aa).

The TsaA-like domain maps to 4 to 126 (LKPIGVVEQN…FSEKLDCPKI (123 aa)). Residues 45 to 46 (HK), R75, and 106 to 109 (YNET) each bind S-adenosyl-L-methionine.

Belongs to the tRNA methyltransferase O family.

The sequence is that of Probable S-adenosyl-L-methionine-binding protein MJ1583 from Methanocaldococcus jannaschii (strain ATCC 43067 / DSM 2661 / JAL-1 / JCM 10045 / NBRC 100440) (Methanococcus jannaschii).